The chain runs to 1330 residues: pre-mRNA 3' end processing protein WDR33 (1330 aa).

A2 is subject to N-acetylalanine. S7 carries the phosphoserine modification. K46 bears the N6-acetyllysine mark. WD repeat units lie at residues 117–156 (KVKCPVFVVRWTPEGRRLVTGASSGEFTLWNGLTFNFETI), 159–198 (AHDSPVRAMTWSHNDMWMLTADHGGYVKYWQSNMNNVKMF), 200–239 (AHKEAIREASFSPTDNKFATCSDDGTVRIWDFLRCHEERI), 242–283 (GHGA…SLAT), 286–325 (AHKNTVMEVKLNLNGNWLLTASRDHLCKLFDIRNLKEELQ), 329–369 (GHKK…EVGG), and 373–412 (AHEGMIWSLAWHPLGHILCSGSNDHTSKFWTRNRPGDKMR). Residues K526, K530, and K560 each participate in a glycyl lysine isopeptide (Lys-Gly) (interchain with G-Cter in SUMO2) cross-link. The tract at residues 566–1330 (QKQADQIQPP…GTSRGSGRGR (765 aa)) is disordered. A compositionally biased stretch (polar residues) spans 588–607 (FSGQGPISQIPQGFQQPHPS). The Collagen-like domain occupies 617 to 769 (GPPGPQGQFR…GPASQGIQGP (153 aa)). Over residues 622–642 (QGQFRAPGPQGQMGPQGPPMH) the composition is skewed to low complexity. The span at 682–694 (PHGPLGPQGPPGP) shows a compositional bias: pro residues. Composition is skewed to low complexity over residues 695 to 706 (QGSSGPQGHMGP) and 725 to 750 (QGHMGPQGPPGTQGMQGPPGPRGMQG). R776 carries the omega-N-methylarginine modification. Residues 848 to 863 (GPSGSQGQQGPPQGSL) are compositionally biased toward low complexity. Position 909 is an asymmetric dimethylarginine (R909). Low complexity predominate over residues 926–935 (PGLGQQGAQG). Composition is skewed to basic and acidic residues over residues 965-983 (SERRHEQSGGPEHGPDRGP) and 992-1027 (GPPDRRGSHPDFPDDFRPDDFHPDKRFGHRLREFEG). R981 is subject to Omega-N-methylarginine. Residue R1028 is modified to Omega-N-methylarginine. Basic and acidic residues-rich tracts occupy residues 1049-1061 (PDHREFNEGDGRG) and 1071-1115 (EGRR…RGRD). Residues 1123–1133 (FGPEEGFDASD) are compositionally biased toward acidic residues. 3 stretches are compositionally biased toward basic and acidic residues: residues 1134–1143 (EAARGRDLRG), 1163–1211 (EFPR…RERS), and 1236–1253 (SEHREMEAQGGPSEDRGS). At S1204 the chain carries Phosphoserine. R1256 bears the Omega-N-methylarginine mark. Residues 1275-1287 (DGDHHDGYHRDEP) are compositionally biased toward basic and acidic residues. Residues 1293-1323 (GSSSSSRGARSGSNWGRGSNMNSGPPRRGTS) show a composition bias toward low complexity. R1309 bears the Asymmetric dimethylarginine; alternate mark. At R1309 the chain carries Omega-N-methylarginine; alternate.

The protein belongs to the WD repeat WDR33 family. In terms of assembly, component of the cleavage and polyadenylation specificity factor (CPSF) module of the pre-mRNA 3'-end processing complex. Interacts with CPSF3/CPSF73. Most highly expressed in testis.

The protein resides in the nucleus. Its function is as follows. Essential for both cleavage and polyadenylation of pre-mRNA 3' ends. In Mus musculus (Mouse), this protein is pre-mRNA 3' end processing protein WDR33 (Wdr33).